The chain runs to 340 residues: Ketol-acid reductoisomerase (NADP(+)) (340 aa).

Positions 2-182 constitute a KARI N-terminal Rossmann domain; that stretch reads AELYYDNQAD…GCTRAGVLRT (181 aa). Residues 25 to 28, Ser-51, Ser-53, and 83 to 86 each bind NADP(+); these read FGSQ and DIGQ. The active site involves His-108. Residue Gly-134 coordinates NADP(+). The KARI C-terminal knotted domain maps to 183–328; sequence TFAEETETDL…RELRRMMPFV (146 aa). Asp-191, Glu-195, Glu-227, and Glu-231 together coordinate Mg(2+). Residue Ser-252 coordinates substrate.

The protein belongs to the ketol-acid reductoisomerase family. Requires Mg(2+) as cofactor.

The catalysed reaction is (2R)-2,3-dihydroxy-3-methylbutanoate + NADP(+) = (2S)-2-acetolactate + NADPH + H(+). It catalyses the reaction (2R,3R)-2,3-dihydroxy-3-methylpentanoate + NADP(+) = (S)-2-ethyl-2-hydroxy-3-oxobutanoate + NADPH + H(+). It functions in the pathway amino-acid biosynthesis; L-isoleucine biosynthesis; L-isoleucine from 2-oxobutanoate: step 2/4. Its pathway is amino-acid biosynthesis; L-valine biosynthesis; L-valine from pyruvate: step 2/4. Involved in the biosynthesis of branched-chain amino acids (BCAA). Catalyzes an alkyl-migration followed by a ketol-acid reduction of (S)-2-acetolactate (S2AL) to yield (R)-2,3-dihydroxy-isovalerate. In the isomerase reaction, S2AL is rearranged via a Mg-dependent methyl migration to produce 3-hydroxy-3-methyl-2-ketobutyrate (HMKB). In the reductase reaction, this 2-ketoacid undergoes a metal-dependent reduction by NADPH to yield (R)-2,3-dihydroxy-isovalerate. The polypeptide is Ketol-acid reductoisomerase (NADP(+)) (Chloroflexus aggregans (strain MD-66 / DSM 9485)).